Consider the following 186-residue polypeptide: 3-hydroxyanthranilate 3,4-dioxygenase (186 aa).

R44 is a binding site for O2. The Fe cation site is built by H48, E54, and H96. Substrate is bound at residue E54. Substrate-binding residues include R100 and E110. A divalent metal cation is bound by residues C125, C130, C164, and C167.

This sequence belongs to the 3-HAO family. Requires Fe(2+) as cofactor.

The protein resides in the cytoplasm. The catalysed reaction is 3-hydroxyanthranilate + O2 = (2Z,4Z)-2-amino-3-carboxymuconate 6-semialdehyde. The protein operates within cofactor biosynthesis; NAD(+) biosynthesis; quinolinate from L-kynurenine: step 3/3. Functionally, catalyzes the oxidative ring opening of 3-hydroxyanthranilate to 2-amino-3-carboxymuconate semialdehyde, which spontaneously cyclizes to quinolinate. This chain is 3-hydroxyanthranilate 3,4-dioxygenase, found in Chaetomium globosum (strain ATCC 6205 / CBS 148.51 / DSM 1962 / NBRC 6347 / NRRL 1970) (Soil fungus).